Here is a 360-residue protein sequence, read N- to C-terminus: Probable dual-specificity RNA methyltransferase RlmN (360 aa).

E103 (proton acceptor) is an active-site residue. One can recognise a Radical SAM core domain in the interval 109-342; the sequence is HEYGNSVCVT…VTIRREQGHD (234 aa). C116 and C347 are disulfide-bonded. [4Fe-4S] cluster contacts are provided by C123, C127, and C130. S-adenosyl-L-methionine is bound by residues 173–174, S205, 228–230, and N304; these read GE and SLH. The active-site S-methylcysteine intermediate is C347.

This sequence belongs to the radical SAM superfamily. RlmN family. [4Fe-4S] cluster serves as cofactor.

It localises to the cytoplasm. It carries out the reaction adenosine(2503) in 23S rRNA + 2 reduced [2Fe-2S]-[ferredoxin] + 2 S-adenosyl-L-methionine = 2-methyladenosine(2503) in 23S rRNA + 5'-deoxyadenosine + L-methionine + 2 oxidized [2Fe-2S]-[ferredoxin] + S-adenosyl-L-homocysteine. The enzyme catalyses adenosine(37) in tRNA + 2 reduced [2Fe-2S]-[ferredoxin] + 2 S-adenosyl-L-methionine = 2-methyladenosine(37) in tRNA + 5'-deoxyadenosine + L-methionine + 2 oxidized [2Fe-2S]-[ferredoxin] + S-adenosyl-L-homocysteine. In terms of biological role, specifically methylates position 2 of adenine 2503 in 23S rRNA and position 2 of adenine 37 in tRNAs. In Bacillus pumilus (strain SAFR-032), this protein is Probable dual-specificity RNA methyltransferase RlmN.